Here is an 801-residue protein sequence, read N- to C-terminus: PR domain zinc finger protein 4 (801 aa).

Residues 412–529 (KQLVLRQSIV…PENELLFYYS (118 aa)) enclose the SET domain. A C2H2-type 1; atypical zinc finger spans residues 545–566 (HLCNCGKECNSYTEFKAHLTSH). 4 C2H2-type zinc fingers span residues 618–640 (HKCD…LKIH), 646–668 (YRCT…MVIH), 674–696 (LKCD…VLIH), and 702–724 (IKCP…LNSH). Residues 730–752 (YVCEKCTKAYLTKYHLTRHLKTC) form a C2H2-type 6; atypical zinc finger. The disordered stretch occupies residues 751–782 (TCKGPTSSSSAPEEEEEDDSEEEDLADSVGTE). The segment covering 762–776 (PEEEEEDDSEEEDLA) has biased composition (acidic residues).

It belongs to the class V-like SAM-binding methyltransferase superfamily. As to expression, expressed in many tissues. Highly expressed in ovary, testis, pancreas, brain, heart and prostate.

It is found in the nucleus. In terms of biological role, may function as a transcription factor involved in cell differentiation. The sequence is that of PR domain zinc finger protein 4 (PRDM4) from Homo sapiens (Human).